A 277-amino-acid polypeptide reads, in one-letter code: Co-chaperone protein DjlA (277 aa).

At 1–4 the chain is on the periplasmic side; sequence MWGK. The helical transmembrane segment at 5 to 28 threads the bilayer; sequence ILGAFFGFLLGGPFGLLLGLFLGH. The Cytoplasmic segment spans residues 29–277; it reads KFDKARRNVY…DMIRKEKGFK (249 aa). Positions 211-277 constitute a J domain; that stretch reads DAYEVLGVTE…DMIRKEKGFK (67 aa).

Homodimer.

It localises to the cell inner membrane. Its function is as follows. Regulatory DnaK co-chaperone. Direct interaction between DnaK and DjlA is needed for the induction of the wcaABCDE operon, involved in the synthesis of a colanic acid polysaccharide capsule, possibly through activation of the RcsB/RcsC phosphotransfer signaling pathway. The colanic acid capsule may help the bacterium survive conditions outside the host. The polypeptide is Co-chaperone protein DjlA (Photobacterium profundum (strain SS9)).